Reading from the N-terminus, the 96-residue chain is Small ribosomal subunit protein bS16 (96 aa).

It belongs to the bacterial ribosomal protein bS16 family.

In Anaplasma phagocytophilum (strain HZ), this protein is Small ribosomal subunit protein bS16.